A 678-amino-acid chain; its full sequence is RxLR effector protein PITG_16705 (678 aa).

Positions 1–20 are cleaved as a signal peptide; it reads MHLFFLTAVAFVITSVSVDA. A RxLR-dEER motif is present at residues 46–61; it reads RLLRKNSTVDLVGEER.

The protein belongs to the RxLR effector family.

Its subcellular location is the secreted. It is found in the host cytoplasm. Effector that enhances P.infestans colonization of Nicotiana benthamiana leaves. In Phytophthora infestans (strain T30-4) (Potato late blight agent), this protein is RxLR effector protein PITG_16705.